Consider the following 553-residue polypeptide: CDP-diacylglycerol--glycerol-3-phosphate 3-phosphatidyltransferase, mitochondrial (553 aa).

The N-terminal 25 residues, 1-25 (MAAPAAGPVFWRRLLGLLPGRPGLA), are a transit peptide targeting the mitochondrion. Serine 46 is modified (phosphoserine). 121–128 (ASLYLGTG) contacts ATP. 2 consecutive PLD phosphodiesterase domains span residues 212-238 (TIGL…SDSY) and 457-490 (TGWT…GYRS). Residues histidine 217, lysine 219, and aspartate 224 contribute to the active site.

The protein belongs to the CDP-alcohol phosphatidyltransferase class-II family.

It localises to the mitochondrion. It catalyses the reaction a CDP-1,2-diacyl-sn-glycerol + sn-glycerol 3-phosphate = a 1,2-diacyl-sn-glycero-3-phospho-(1'-sn-glycero-3'-phosphate) + CMP + H(+). It functions in the pathway phospholipid metabolism; phosphatidylglycerol biosynthesis; phosphatidylglycerol from CDP-diacylglycerol: step 1/2. Activated by calcium and magnesium and inhibited by other bivalent cations. Functionally, functions in the biosynthesis of the anionic phospholipids phosphatidylglycerol and cardiolipin. This Cricetulus griseus (Chinese hamster) protein is CDP-diacylglycerol--glycerol-3-phosphate 3-phosphatidyltransferase, mitochondrial (PGS1).